The sequence spans 183 residues: Nucleoside triphosphate pyrophosphatase (183 aa).

Residue aspartate 71 is the Proton acceptor of the active site.

The protein belongs to the Maf family. It depends on a divalent metal cation as a cofactor.

Its subcellular location is the cytoplasm. The catalysed reaction is a ribonucleoside 5'-triphosphate + H2O = a ribonucleoside 5'-phosphate + diphosphate + H(+). It carries out the reaction a 2'-deoxyribonucleoside 5'-triphosphate + H2O = a 2'-deoxyribonucleoside 5'-phosphate + diphosphate + H(+). Nucleoside triphosphate pyrophosphatase. May have a dual role in cell division arrest and in preventing the incorporation of modified nucleotides into cellular nucleic acids. The chain is Nucleoside triphosphate pyrophosphatase from Campylobacter jejuni subsp. doylei (strain ATCC BAA-1458 / RM4099 / 269.97).